A 962-amino-acid chain; its full sequence is Translation initiation factor IF-2 (962 aa).

The tract at residues 99–365 is disordered; sequence VKAAQTQAAP…GKKGKKLKLE (267 aa). Residues 117 to 141 are compositionally biased toward basic and acidic residues; that stretch reads DAAKARAEAAARAEARAKAEAEAAK. A compositionally biased stretch (low complexity) spans 145-155; it reads AKAGNKAKPAA. Basic and acidic residues predominate over residues 173 to 216; sequence KPAEESKAEKAQADKMPSKKPAEPKEKAAKPKHERNGKGKDAKK. Low complexity predominate over residues 219–234; it reads KPAAPAVPQPVVSAEE. Basic and acidic residues predominate over residues 235-269; sequence QAQRDEEARRAAALRAHQEALLKEKQERQARREAM. Over residues 270 to 283 the composition is skewed to low complexity; sequence KQQAEQQAKAAQEA. A compositionally biased stretch (basic and acidic residues) spans 338–354; sequence GGRDRNNARNGDDERVR. Positions 462–631 constitute a tr-type G domain; sequence PRPPVVTVMG…LLEAEVLELT (170 aa). The G1 stretch occupies residues 471–478; sequence GHVDHGKT. 471–478 provides a ligand contact to GTP; that stretch reads GHVDHGKT. Residues 496–500 form a G2 region; that stretch reads GITQH. The interval 517–520 is G3; it reads DTPG. GTP-binding positions include 517 to 521 and 571 to 574; these read DTPGH and NKID. Positions 571–574 are G4; sequence NKID. The G5 stretch occupies residues 607 to 609; that stretch reads SAK.

This sequence belongs to the TRAFAC class translation factor GTPase superfamily. Classic translation factor GTPase family. IF-2 subfamily.

The protein localises to the cytoplasm. One of the essential components for the initiation of protein synthesis. Protects formylmethionyl-tRNA from spontaneous hydrolysis and promotes its binding to the 30S ribosomal subunits. Also involved in the hydrolysis of GTP during the formation of the 70S ribosomal complex. This is Translation initiation factor IF-2 from Neisseria meningitidis serogroup C (strain 053442).